The sequence spans 292 residues: uncharacterized protein (292 aa).

The tract at residues 62 to 81 (ESSSDSDMGFHESQQNQKSN) is disordered.

This is an uncharacterized protein from Homo sapiens (Human).